We begin with the raw amino-acid sequence, 810 residues long: Transducer protein CosT (810 aa).

The Cytoplasmic portion of the chain corresponds to 1 to 38; the sequence is MSEPTADAGDNSPSSTDTAPLDRVKAIALLPLRSYLVK. The chain crosses the membrane as a helical span at residues 39 to 59; that stretch reads FAVALLVILVIIAAGGFWVQA. Topologically, residues 60 to 323 are extracellular; sequence DATATLEANT…AFALSNQIRT (264 aa). Residues 324 to 344 traverse the membrane as a helical segment; sequence GILGFILVALVGVVLVGGTIG. An HAMP 1 domain is found at 345–397; the sequence is RNTAAAVQSLSAAAAEIEAGNYDVDVASSRRDEIGQLFASIGSMRDALVTQID. The Cytoplasmic portion of the chain corresponds to 345–810; sequence RNTAAAVQSL…DRDVTPTQTD (466 aa). Residues 403-427 form a disordered region; sequence REQATEAQQDAEAERERAEDARERA. Positions 414 to 427 are enriched in basic and acidic residues; it reads EAERERAEDARERA. The HAMP 2 domain maps to 439 to 493; the sequence is AELEAQAERYSDVMAACADGDLTRRMPADDTDNEAMAAIAASFNEMLAQWEHTII. A Methyl-accepting transducer domain is found at 512 to 748; that stretch reads GAADAERASG…EAVSMTEEVA (237 aa). Residues glutamate 556 and glutamate 739 each carry the glutamate methyl ester (Glu) modification. The segment at 751–784 is disordered; sequence SDSTAGEAQSVSAAAEEQAASMSEISDSVESLSG. Positions 755–774 are enriched in low complexity; that stretch reads AGEAQSVSAAAEEQAASMSE. Positions 775 to 784 are enriched in polar residues; sequence ISDSVESLSG.

Belongs to the methyl-accepting chemotaxis (MCP) protein family. Post-translationally, methylated by CheR.

The protein localises to the cell membrane. Its function is as follows. Mediates chemotaxis towards compatible osmolytes. Probably transduces the signal from the substrate-binding protein CosB to the histidine kinase CheA. This is Transducer protein CosT (cosT) from Halobacterium salinarum (strain ATCC 700922 / JCM 11081 / NRC-1) (Halobacterium halobium).